The primary structure comprises 631 residues: MAEAPQPPPPLVEIDPDFEPFSRPRSCTWPLPRPEFNPSSSANSSPAPSLQPEPAAGNVDFLSNLSLLEESEDFDPAEALGVCGDFPCQDIRQLQPPIPQQQQQHSQQQQEALTLLAPSVPSALSPASSPSPLGAQQPRKSSSSRRNAWGNLSYADLISQAIESSPEKRLTLSQIYDWMVKSVPYFKDKGDSNSSAGWKNSIRHNLSLHSKFVRVQNEGTGKSSWWILNPEGGKNGKSPRRRAASMDNNSKFAKSRGRAAKKKASMQSSQDGSSDSPGSQFSKWPGSPSSQSNDDFEAWSTFRPRTSSNASTISGRLSPIMPEQDDLGDADVHNLVYPSSATKLTSTLPSLSEMGNSENMENLLDNLNLLTPNSSTQSSPASMMQQSGYLFTSPNTSLGSPNSEYRKYSYAQTGISPISQMPMQTVPENKSGYRAVGQYPVPAGLLKELLTSDSPPHNDILTPVDPAVSQANNRVLGQNSLIGSNSIMPAYGSQPAPNKMSSHPHLHQPNHPTSINGRPIAHNPGINRLSTVKTSVQVPMPHQPIQMTSMGSYSMNSCNGYGRVGIVSIHQEILPSDLDDMLIESLDCDVESIIRNDLMEDGEADFNFDSILPNQSFPHSVTTTTHSWVSG.

Residues 1–11 (MAEAPQPPPPL) are compositionally biased toward pro residues. Disordered stretches follow at residues 1–57 (MAEA…PAAG), 90–147 (DIRQ…SRRN), 223–324 (SSWW…MPEQ), and 372–404 (PNSSTQSSPASMMQQSGYLFTSPNTSLGSPNSE). Composition is skewed to low complexity over residues 37-48 (NPSSSANSSPAP) and 100-135 (QQQQQHSQQQQEALTLLAPSVPSALSPASSPSPLGA). A DNA-binding region (fork-head) is located at residues 149-243 (WGNLSYADLI…KNGKSPRRRA (95 aa)). The segment covering 253-264 (AKSRGRAAKKKA) has biased composition (basic residues). The span at 265–282 (SMQSSQDGSSDSPGSQFS) shows a compositional bias: low complexity. Polar residues-rich tracts occupy residues 303 to 315 (RPRTSSNASTISG) and 381 to 403 (ASMMQQSGYLFTSPNTSLGSPNS).

Post-translationally, phosphorylated by AKT1; insulin-induced. In terms of processing, IGF1 rapidly induces phosphorylation of Thr-28, Ser-245 and Ser-308. Phosphorylation of Ser-245 decreases DNA-binding activity and promotes the phosphorylation of Thr-28, and Ser-308, which leads to nuclear exclusion and loss of function. Phosphorylation of Ser-318 is independent of IGF1 and leads to reduced function. As to expression, localized to the animal hemisphere during early cleavage stages. At early tadpole stages, expressed in the branchial arches, pronephros and liver. Within the head, expressed in the forming thyroid gland and in head mesenchyme anterior to the eyes.

Its subcellular location is the cytoplasm. The protein resides in the nucleus. Functionally, transcription factor that regulates metabolic homeostasis in response to oxidative stress. Binds to the consensus sequence 5'-TT[G/A]TTTTG-3' and the related Daf-16 family binding element (DBE) with consensus sequence 5'-TT[G/A]TTTAC-3'. Main regulator of redox balance and osteoblast numbers and controls bone mass. Orchestrates the endocrine function of the skeleton in regulating glucose metabolism. Also acts as a key regulator of chondrogenic commitment of skeletal progenitor cells in response to lipid availability: when lipids levels are low, translocates to the nucleus and promotes expression of sox9, which induces chondrogenic commitment and suppresses fatty acid oxidation. Acts synergistically with atf4 to suppress osteocalcin/bglap activity, increasing glucose levels and triggering glucose intolerance and insulin insensitivity. Also suppresses the transcriptional activity of runx2, an upstream activator of osteocalcin/bglap. May act as a positive regulator of apoptosis in cardiac smooth muscle cells as a result of its transcriptional activation of pro-apoptotic genes. The polypeptide is Forkhead box protein O1 (Xenopus laevis (African clawed frog)).